A 419-amino-acid chain; its full sequence is L-rhamnose isomerase (419 aa).

Mn(2+)-binding residues include His262, Asp294, and Asp296.

It belongs to the rhamnose isomerase family. Homotetramer. It depends on Mn(2+) as a cofactor.

It localises to the cytoplasm. The catalysed reaction is L-rhamnopyranose = L-rhamnulose. It functions in the pathway carbohydrate degradation; L-rhamnose degradation; glycerone phosphate from L-rhamnose: step 1/3. In terms of biological role, catalyzes the interconversion of L-rhamnose and L-rhamnulose. The protein is L-rhamnose isomerase of Escherichia coli O45:K1 (strain S88 / ExPEC).